Consider the following 109-residue polypeptide: Mitochondrial import receptor subunit TOM22 homolog (109 aa).

Residues 1-60 (MALVRDDFDDIPDSEIHETIVERIEGLGEMFPDALRSAVHSTVDWSIWGVKGVFSLTKST) lie on the Cytoplasmic side of the membrane. A helical membrane pass occupies residues 61–77 (IWVVSTTSLIAFLPYII). Over 78–109 (EKERSDLEKTQVAQQRQMLLGPSAAIQQAKTA) the chain is Mitochondrial intermembrane.

Belongs to the Tom22 family. Forms part of the preprotein translocase complex of the outer mitochondrial membrane (TOM complex).

It localises to the mitochondrion outer membrane. In terms of biological role, central receptor component of the translocase of the outer membrane of mitochondria (TOM complex) responsible for the recognition and translocation of cytosolically synthesized mitochondrial preproteins. Together with the peripheral receptor tomm-20 functions as the transit peptide receptor and facilitates the movement of preproteins into the translocation pore. The sequence is that of Mitochondrial import receptor subunit TOM22 homolog from Caenorhabditis elegans.